Reading from the N-terminus, the 112-residue chain is T cell receptor alpha variable 21 (112 aa).

Residues Met-1–Ser-19 form the signal peptide. One can recognise an Ig-like domain in the interval Gln-21–Arg-112. Residues Asn-41 and Asn-82 are each glycosylated (N-linked (GlcNAc...) asparagine). Cys-42 and Cys-109 are joined by a disulfide.

Alpha-beta TR is a heterodimer composed of an alpha and beta chain; disulfide-linked. The alpha-beta TR is associated with the transmembrane signaling CD3 coreceptor proteins to form the TR-CD3 (TcR or TCR). The assembly of alpha-beta TR heterodimers with CD3 occurs in the endoplasmic reticulum where a single alpha-beta TR heterodimer associates with one CD3D-CD3E heterodimer, one CD3G-CD3E heterodimer and one CD247 homodimer forming a stable octameric structure. CD3D-CD3E and CD3G-CD3E heterodimers preferentially associate with TR alpha and TR beta chains, respectively. The association of the CD247 homodimer is the last step of TcR assembly in the endoplasmic reticulum and is required for transport to the cell surface.

Its subcellular location is the cell membrane. Functionally, v region of the variable domain of T cell receptor (TR) alpha chain that participates in the antigen recognition. Alpha-beta T cell receptors are antigen specific receptors which are essential to the immune response and are present on the cell surface of T lymphocytes. Recognize peptide-major histocompatibility (MH) (pMH) complexes that are displayed by antigen presenting cells (APC), a prerequisite for efficient T cell adaptive immunity against pathogens. Binding of alpha-beta TR to pMH complex initiates TR-CD3 clustering on the cell surface and intracellular activation of LCK that phosphorylates the ITAM motifs of CD3G, CD3D, CD3E and CD247 enabling the recruitment of ZAP70. In turn ZAP70 phosphorylates LAT, which recruits numerous signaling molecules to form the LAT signalosome. The LAT signalosome propagates signal branching to three major signaling pathways, the calcium, the mitogen-activated protein kinase (MAPK) kinase and the nuclear factor NF-kappa-B (NF-kB) pathways, leading to the mobilization of transcription factors that are critical for gene expression and essential for T cell growth and differentiation. The T cell repertoire is generated in the thymus, by V-(D)-J rearrangement. This repertoire is then shaped by intrathymic selection events to generate a peripheral T cell pool of self-MH restricted, non-autoaggressive T cells. Post-thymic interaction of alpha-beta TR with the pMH complexes shapes TR structural and functional avidity. The sequence is that of T cell receptor alpha variable 21 from Homo sapiens (Human).